We begin with the raw amino-acid sequence, 509 residues long: ATP synthase subunit alpha (509 aa).

An ATP-binding site is contributed by 169–176 (GDRQTGKT).

Belongs to the ATPase alpha/beta chains family. In terms of assembly, F-type ATPases have 2 components, CF(1) - the catalytic core - and CF(0) - the membrane proton channel. CF(1) has five subunits: alpha(3), beta(3), gamma(1), delta(1), epsilon(1). CF(0) has three main subunits: a(1), b(2) and c(9-12). The alpha and beta chains form an alternating ring which encloses part of the gamma chain. CF(1) is attached to CF(0) by a central stalk formed by the gamma and epsilon chains, while a peripheral stalk is formed by the delta and b chains.

It is found in the cell inner membrane. It catalyses the reaction ATP + H2O + 4 H(+)(in) = ADP + phosphate + 5 H(+)(out). Its function is as follows. Produces ATP from ADP in the presence of a proton gradient across the membrane. The alpha chain is a regulatory subunit. The chain is ATP synthase subunit alpha from Brucella abortus (strain S19).